We begin with the raw amino-acid sequence, 486 residues long: Bifunctional protein GlmU (486 aa).

The interval 1-236 (MTDQNLAIVV…SWLVDGINDR (236 aa)) is pyrophosphorylase. Residues 11–14 (LAAG), K25, Q78, and 83–84 (GT) contribute to the UDP-N-acetyl-alpha-D-glucosamine site. D109 provides a ligand contact to Mg(2+). Positions 146, 161, 176, and 234 each coordinate UDP-N-acetyl-alpha-D-glucosamine. N234 lines the Mg(2+) pocket. The linker stretch occupies residues 237-257 (AQLSEAAAKLNALTVRAWQLA). The N-acetyltransferase stretch occupies residues 258–486 (GVTVQDPATT…ASNAAEESGE (229 aa)). UDP-N-acetyl-alpha-D-glucosamine contacts are provided by R339 and K357. H369 acts as the Proton acceptor in catalysis. UDP-N-acetyl-alpha-D-glucosamine-binding residues include Y372 and N383. Residues A386, 392-393 (NY), and A429 each bind acetyl-CoA. The interval 459-486 (RRPGTDAARAAQRNGAAEASNAAEESGE) is disordered. The segment covering 465–486 (AARAAQRNGAAEASNAAEESGE) has biased composition (low complexity).

It in the N-terminal section; belongs to the N-acetylglucosamine-1-phosphate uridyltransferase family. In the C-terminal section; belongs to the transferase hexapeptide repeat family. Homotrimer. Mg(2+) serves as cofactor.

Its subcellular location is the cytoplasm. It catalyses the reaction alpha-D-glucosamine 1-phosphate + acetyl-CoA = N-acetyl-alpha-D-glucosamine 1-phosphate + CoA + H(+). It carries out the reaction N-acetyl-alpha-D-glucosamine 1-phosphate + UTP + H(+) = UDP-N-acetyl-alpha-D-glucosamine + diphosphate. It participates in nucleotide-sugar biosynthesis; UDP-N-acetyl-alpha-D-glucosamine biosynthesis; N-acetyl-alpha-D-glucosamine 1-phosphate from alpha-D-glucosamine 6-phosphate (route II): step 2/2. It functions in the pathway nucleotide-sugar biosynthesis; UDP-N-acetyl-alpha-D-glucosamine biosynthesis; UDP-N-acetyl-alpha-D-glucosamine from N-acetyl-alpha-D-glucosamine 1-phosphate: step 1/1. Its pathway is bacterial outer membrane biogenesis; LPS lipid A biosynthesis. In terms of biological role, catalyzes the last two sequential reactions in the de novo biosynthetic pathway for UDP-N-acetylglucosamine (UDP-GlcNAc). The C-terminal domain catalyzes the transfer of acetyl group from acetyl coenzyme A to glucosamine-1-phosphate (GlcN-1-P) to produce N-acetylglucosamine-1-phosphate (GlcNAc-1-P), which is converted into UDP-GlcNAc by the transfer of uridine 5-monophosphate (from uridine 5-triphosphate), a reaction catalyzed by the N-terminal domain. The polypeptide is Bifunctional protein GlmU (Leifsonia xyli subsp. xyli (strain CTCB07)).